Consider the following 357-residue polypeptide: (4E)-oxalomesaconate Delta-isomerase (357 aa).

This sequence belongs to the PrpF family.

The catalysed reaction is (1E)-4-oxobut-1-ene-1,2,4-tricarboxylate = (3Z)-2-oxo-4-carboxy-3-hexenedioate. It participates in secondary metabolite metabolism; lignin degradation. Contributes to the degradation of lignin at the level of the protocatechuate 4,5-cleavage pathway. Catalyzes the isomerization of the double bond between C4 and C5 in (4E)-oxalomesaconate (OMA) to (3Z)-2-keto-4-carboxy-3-hexenedioate (KCH), where the double bond has migrated between C3 and C4 via a 1,3-allylic isomerization. This is (4E)-oxalomesaconate Delta-isomerase from Novosphingobium sp. (strain KA1) (Sphingomonas sp. (strain KA1)).